Here is a 200-residue protein sequence, read N- to C-terminus: Proteasome subunit beta 2 (200 aa).

Residues 1 to 7 constitute a propeptide, removed in mature form; by autocatalysis; it reads METKKTG. T8 acts as the Nucleophile in catalysis.

Belongs to the peptidase T1B family. The 20S proteasome core is composed of 14 alpha and 14 beta subunits that assemble into four stacked heptameric rings, resulting in a barrel-shaped structure. The two inner rings, each composed of seven catalytic beta subunits, are sandwiched by two outer rings, each composed of seven alpha subunits. The catalytic chamber with the active sites is on the inside of the barrel. Has a gated structure, the ends of the cylinder being occluded by the N-termini of the alpha-subunits. Is capped at one or both ends by the proteasome regulatory ATPase, PAN.

It is found in the cytoplasm. It carries out the reaction Cleavage of peptide bonds with very broad specificity.. The formation of the proteasomal ATPase PAN-20S proteasome complex, via the docking of the C-termini of PAN into the intersubunit pockets in the alpha-rings, triggers opening of the gate for substrate entry. Interconversion between the open-gate and close-gate conformations leads to a dynamic regulation of the 20S proteasome proteolysis activity. Its function is as follows. Component of the proteasome core, a large protease complex with broad specificity involved in protein degradation. The protein is Proteasome subunit beta 2 of Thermococcus onnurineus (strain NA1).